Reading from the N-terminus, the 407-residue chain is Serine/threonine transporter SstT (407 aa).

Helical transmembrane passes span 12-32 (GNLI…GISS), 42-62 (LGIL…FILI), 81-101 (IIIL…LANF), 141-161 (ALSS…GIAL), 179-199 (VLKI…GLVA), 218-238 (ILLV…IVFF), 245-267 (FPLI…SSAA), 288-308 (ISIP…IAIL), and 330-350 (IIAT…LLLI).

Belongs to the dicarboxylate/amino acid:cation symporter (DAACS) (TC 2.A.23) family.

The protein localises to the cell inner membrane. It catalyses the reaction L-serine(in) + Na(+)(in) = L-serine(out) + Na(+)(out). The enzyme catalyses L-threonine(in) + Na(+)(in) = L-threonine(out) + Na(+)(out). Its function is as follows. Involved in the import of serine and threonine into the cell, with the concomitant import of sodium (symport system). This Campylobacter jejuni subsp. jejuni serotype O:23/36 (strain 81-176) protein is Serine/threonine transporter SstT.